Here is a 1343-residue protein sequence, read N- to C-terminus: DNA-directed RNA polymerase subunit beta (1343 aa).

This sequence belongs to the RNA polymerase beta chain family. As to quaternary structure, the RNAP catalytic core consists of 2 alpha, 1 beta, 1 beta' and 1 omega subunit. When a sigma factor is associated with the core the holoenzyme is formed, which can initiate transcription.

The catalysed reaction is RNA(n) + a ribonucleoside 5'-triphosphate = RNA(n+1) + diphosphate. In terms of biological role, DNA-dependent RNA polymerase catalyzes the transcription of DNA into RNA using the four ribonucleoside triphosphates as substrates. This Haemophilus influenzae (strain ATCC 51907 / DSM 11121 / KW20 / Rd) protein is DNA-directed RNA polymerase subunit beta.